A 428-amino-acid chain; its full sequence is Immunoglobulin superfamily containing leucine-rich repeat protein (428 aa).

Positions 1 to 18 (MQELHLLWWALLLGLAQA) are cleaved as a signal peptide. The region spanning 19-50 (CPEPCDCGEKYGFQIADCAYRDLESVPPGFPA) is the LRRNT domain. N-linked (GlcNAc...) asparagine glycosylation occurs at Asn51. 5 LRR repeats span residues 51 to 72 (NVTT…AFRE), 75 to 96 (LLQS…ALAS), 99 to 122 (HLKS…HNLS), 123 to 144 (ALQL…AFRS), and 147 to 168 (ALRS…TFTP). The LRRCT domain occupies 180–231 (NPFDCTCGIVWLKTWALTTAVSIPEQDNIACTSPHVLKGTPLSRLPPLPCSA). An Ig-like domain is found at 232–343 (PSVQLSYQPS…GSAESSVDVA (112 aa)). Residues Cys257 and Cys327 are joined by a disulfide bond. N-linked (GlcNAc...) asparagine glycosylation occurs at Asn309.

Expressed in various tissues including retina, heart, skeletal muscle, prostate, ovary, small intestine, thyroid, adrenal cortex, testis, stomach and spinal cord.

It localises to the secreted. This chain is Immunoglobulin superfamily containing leucine-rich repeat protein (ISLR), found in Homo sapiens (Human).